Reading from the N-terminus, the 422-residue chain is Serine--tRNA ligase (422 aa).

230–232 (TAE) is an L-serine binding site. 261–263 (RNE) provides a ligand contact to ATP. Glu-284 contributes to the L-serine binding site. Residue 347–350 (EVSS) participates in ATP binding. An L-serine-binding site is contributed by Ser-383.

The protein belongs to the class-II aminoacyl-tRNA synthetase family. Type-1 seryl-tRNA synthetase subfamily. As to quaternary structure, homodimer. The tRNA molecule binds across the dimer.

It is found in the cytoplasm. It catalyses the reaction tRNA(Ser) + L-serine + ATP = L-seryl-tRNA(Ser) + AMP + diphosphate + H(+). The catalysed reaction is tRNA(Sec) + L-serine + ATP = L-seryl-tRNA(Sec) + AMP + diphosphate + H(+). Its pathway is aminoacyl-tRNA biosynthesis; selenocysteinyl-tRNA(Sec) biosynthesis; L-seryl-tRNA(Sec) from L-serine and tRNA(Sec): step 1/1. Its function is as follows. Catalyzes the attachment of serine to tRNA(Ser). Is also able to aminoacylate tRNA(Sec) with serine, to form the misacylated tRNA L-seryl-tRNA(Sec), which will be further converted into selenocysteinyl-tRNA(Sec). The protein is Serine--tRNA ligase of Herpetosiphon aurantiacus (strain ATCC 23779 / DSM 785 / 114-95).